The following is a 185-amino-acid chain: DNA-directed RNA polymerase 22 kDa subunit (185 aa).

The protein belongs to the poxviridae DNA-directed RNA polymerase 22 kDa subunit family. In terms of assembly, the DNA-dependent RNA polymerase used for intermediate and late genes expression consists of eight subunits Rpo30/OPG66, Rpo7/OPG90, Rpo22/OPG103, Rpo147/OPG105, Rpo18/OPG119, Rpo19/OPG131, Rpo132/OPG151 and Rpo35/OPG156. The same holoenzyme, with the addition of the transcription-specificity factor OPG109, is used for early gene expression.

Its subcellular location is the virion. The enzyme catalyses RNA(n) + a ribonucleoside 5'-triphosphate = RNA(n+1) + diphosphate. Part of the DNA-dependent RNA polymerase which catalyzes the transcription of viral DNA into RNA using the four ribonucleoside triphosphates as substrates. Responsible for the transcription of early, intermediate and late genes. DNA-dependent RNA polymerase associates with the early transcription factor (ETF), itself composed of OPG118 and OPG133, thereby allowing the early genes transcription. Late transcription, and probably also intermediate transcription, require newly synthesized RNA polymerase. This chain is DNA-directed RNA polymerase 22 kDa subunit (OPG103), found in Variola virus (isolate Human/India/Ind3/1967) (VARV).